The sequence spans 169 residues: MSVDNVLDKLVDEKKYRRRDLRNSLASRIGIEDRPSSTPREPPKKRLRFTNVPLDVSDFTLEDMVKEFAEPIYCNFYDLKDSRTAVFEFEDPSVMERVVEKYNETPLNGGTVTVEIFEQERRPDRRRRTQRDNRRGNGRGSRGSHYKRQDRPAMEDELNAELEDYMKSS.

Residues 45–119 (KRLRFTNVPL…GTVTVEIFEQ (75 aa)) form the RRM domain. Residues 119–169 (QERRPDRRRRTQRDNRRGNGRGSRGSHYKRQDRPAMEDELNAELEDYMKSS) are disordered.

It belongs to the YRA1 family. Associates with mRNPs.

The protein localises to the nucleus. Functionally, involved in export of poly(A) mRNAs from the nucleus. Recruited to the coding sequences as well as poly-A sites of active genes. This Zygosaccharomyces rouxii (strain ATCC 2623 / CBS 732 / NBRC 1130 / NCYC 568 / NRRL Y-229) protein is RNA annealing protein YRA2 (YRA2).